Here is a 260-residue protein sequence, read N- to C-terminus: Cytochrome c oxidase subunit 3 (260 aa).

6 helical membrane passes run 41–61, 81–101, 133–153, 161–181, 196–216, and 238–258; these read LTLV…RDII, GMIL…WAFF, TGVL…ILAG, ALFL…WEYI, FFVA…FLMV, and AWYW…IYWW.

The protein belongs to the cytochrome c oxidase subunit 3 family. As to quaternary structure, component of the cytochrome c oxidase (complex IV, CIV), a multisubunit enzyme composed of a catalytic core of 3 subunits and several supernumerary subunits. The complex exists as a monomer or a dimer and forms supercomplexes (SCs) in the inner mitochondrial membrane with ubiquinol-cytochrome c oxidoreductase (cytochrome b-c1 complex, complex III, CIII).

It localises to the mitochondrion inner membrane. The catalysed reaction is 4 Fe(II)-[cytochrome c] + O2 + 8 H(+)(in) = 4 Fe(III)-[cytochrome c] + 2 H2O + 4 H(+)(out). Component of the cytochrome c oxidase, the last enzyme in the mitochondrial electron transport chain which drives oxidative phosphorylation. The respiratory chain contains 3 multisubunit complexes succinate dehydrogenase (complex II, CII), ubiquinol-cytochrome c oxidoreductase (cytochrome b-c1 complex, complex III, CIII) and cytochrome c oxidase (complex IV, CIV), that cooperate to transfer electrons derived from NADH and succinate to molecular oxygen, creating an electrochemical gradient over the inner membrane that drives transmembrane transport and the ATP synthase. Cytochrome c oxidase is the component of the respiratory chain that catalyzes the reduction of oxygen to water. Electrons originating from reduced cytochrome c in the intermembrane space (IMS) are transferred via the dinuclear copper A center (CU(A)) of subunit 2 and heme A of subunit 1 to the active site in subunit 1, a binuclear center (BNC) formed by heme A3 and copper B (CU(B)). The BNC reduces molecular oxygen to 2 water molecules using 4 electrons from cytochrome c in the IMS and 4 protons from the mitochondrial matrix. The polypeptide is Cytochrome c oxidase subunit 3 (COIII) (Strongylocentrotus purpuratus (Purple sea urchin)).